The following is a 406-amino-acid chain: Gustatory receptor for sugar taste 64b (406 aa).

The Cytoplasmic segment spans residues 1–47; it reads MPQGETFHRAVSNVLFISQIYGLLPVSNVRALDVADIRFRWCSPRIL. Residues 48–68 traverse the membrane as a helical segment; it reads YSLLIGILNLSEFGAVINYVI. The Extracellular segment spans residues 69–79; sequence KVTINFHTSST. A helical membrane pass occupies residues 80-100; sequence LSLYIVCLLEHLFFWRLAIQW. The Cytoplasmic portion of the chain corresponds to 101–130; that stretch reads PRIMRTWHGVEQLFLRVPYRFYGEYRIKRR. A helical transmembrane segment spans residues 131 to 151; that stretch reads IYIVFTIVMSSALVEHCLLLG. Residues 152–183 lie on the Extracellular side of the membrane; that stretch reads NSFHLSNMERTQCKINVTYFESIYKWERPHLY. N-linked (GlcNAc...) asparagine glycosylation occurs at N167. The chain crosses the membrane as a helical span at residues 184–204; it reads MILPYHFWMLPILEWVNQTIA. Topologically, residues 205–265 are cytoplasmic; it reads YPRSFTDCFI…KRLVHLLDAA (61 aa). The chain crosses the membrane as a helical span at residues 266-286; sequence IAPLVLLAFGNNMSFICFQLF. Residues 287-290 lie on the Extracellular side of the membrane; sequence NSFK. A helical transmembrane segment spans residues 291 to 311; it reads NIGVDFLVMLAFWYSLGFAVV. Residues 312-370 are Cytoplasmic-facing; the sequence is RTLLTIFVASSINDYERKIVTALRDVPSRAWSIEVQRFSEQLGNDTTALSGSGFFYLTR. Residues 371–391 form a helical membrane-spanning segment; it reads SLVLAMGTTIITYELMISDVI. At 392-406 the chain is on the extracellular side; that stretch reads NQGSIRQKTQYCREY.

This sequence belongs to the insect chemoreceptor superfamily. Gustatory receptor (GR) family. Gr5a subfamily. Expressed in Gr5a-expressing sugar-sensing cells.

The protein resides in the cell membrane. Its function is as follows. One of the few identified sugar gustatory receptors identified so far and which promotes the starvation-induced increase of feeding motivation. This is Gustatory receptor for sugar taste 64b (Gr64b) from Drosophila melanogaster (Fruit fly).